Consider the following 258-residue polypeptide: 1-(5-phosphoribosyl)-5-[(5-phosphoribosylamino)methylideneamino] imidazole-4-carboxamide isomerase (258 aa).

Aspartate 17 acts as the Proton acceptor in catalysis. The active-site Proton donor is aspartate 136.

It belongs to the HisA/HisF family.

It localises to the cytoplasm. It catalyses the reaction 1-(5-phospho-beta-D-ribosyl)-5-[(5-phospho-beta-D-ribosylamino)methylideneamino]imidazole-4-carboxamide = 5-[(5-phospho-1-deoxy-D-ribulos-1-ylimino)methylamino]-1-(5-phospho-beta-D-ribosyl)imidazole-4-carboxamide. It functions in the pathway amino-acid biosynthesis; L-histidine biosynthesis; L-histidine from 5-phospho-alpha-D-ribose 1-diphosphate: step 4/9. The sequence is that of 1-(5-phosphoribosyl)-5-[(5-phosphoribosylamino)methylideneamino] imidazole-4-carboxamide isomerase from Corynebacterium jeikeium (strain K411).